A 407-amino-acid polypeptide reads, in one-letter code: Phosphopentomutase (407 aa).

Positions 10, 306, 311, 347, 348, and 359 each coordinate Mn(2+).

Belongs to the phosphopentomutase family. The cofactor is Mn(2+).

The protein localises to the cytoplasm. It catalyses the reaction 2-deoxy-alpha-D-ribose 1-phosphate = 2-deoxy-D-ribose 5-phosphate. It carries out the reaction alpha-D-ribose 1-phosphate = D-ribose 5-phosphate. Its pathway is carbohydrate degradation; 2-deoxy-D-ribose 1-phosphate degradation; D-glyceraldehyde 3-phosphate and acetaldehyde from 2-deoxy-alpha-D-ribose 1-phosphate: step 1/2. Its function is as follows. Isomerase that catalyzes the conversion of deoxy-ribose 1-phosphate (dRib-1-P) and ribose 1-phosphate (Rib-1-P) to deoxy-ribose 5-phosphate (dRib-5-P) and ribose 5-phosphate (Rib-5-P), respectively. This Salmonella dublin (strain CT_02021853) protein is Phosphopentomutase.